Consider the following 370-residue polypeptide: Protein phosphatase 2C homolog 2 (370 aa).

Positions histidine 23–phenylalanine 291 constitute a PPM-type phosphatase domain. Mn(2+) is bound by residues aspartate 63, glycine 64, aspartate 233, and aspartate 282. 2 positions are modified to phosphoserine: serine 355 and serine 357.

This sequence belongs to the PP2C family. In terms of assembly, monomer. The cofactor is Mg(2+). Requires Mn(2+) as cofactor.

Its subcellular location is the nucleus. The protein localises to the cytoplasm. It is found in the cytosol. It catalyses the reaction O-phospho-L-seryl-[protein] + H2O = L-seryl-[protein] + phosphate. It carries out the reaction O-phospho-L-threonyl-[protein] + H2O = L-threonyl-[protein] + phosphate. With respect to regulation, activity is reduced when phosphosrylated at Ser-355/Ser-357. Functionally, dephosphorylating regulator for many key proteins. Has an important role in osmotic stability and cell shape control. It may negatively regulate the osmosensing signal transmitted through wis1 map kinase. The chain is Protein phosphatase 2C homolog 2 (ptc2) from Schizosaccharomyces pombe (strain 972 / ATCC 24843) (Fission yeast).